Reading from the N-terminus, the 221-residue chain is Protein FixW (221 aa).

The region spanning 5–156 is the Thioredoxin domain; sequence LNLGSPAPPI…LPKVIDGNWR (152 aa). Residues Cys43 and Cys46 are joined by a disulfide bond.

This sequence belongs to the thioredoxin family.

This Rhizobium leguminosarum protein is Protein FixW (fixW).